The primary structure comprises 337 residues: MSVTLAIDAMGGDHGVVVTVSAACDFLEKHADVKIALVGDPDLIKQVLSKSPKAPMERIQIILASEVVLMDDPIEVALRRKKDSSMRVAIEQVKEGAADAVISSGNTGALMAISRYILKTLEGVDRPAIATAIPNELGRGTTMLDLGANADCEPMHLVQFAQMANVMVQVVDGEQNPSIGLLNIGEEVIKGNEVVKQTSELLRQTSLNFYGNVEGNDIFRGTTDIVVCDGFVGNVVLKASEGLAKMMSGLIREEFNRSLLTKLMAVCAIVPLLRVRKRVDHRRYNGAVLLGLRGCVIKSHGSADRFAFGFALDRAYEAAKNRMVERIAAAFVVETKV.

It belongs to the PlsX family. As to quaternary structure, homodimer. Probably interacts with PlsY.

Its subcellular location is the cytoplasm. It carries out the reaction a fatty acyl-[ACP] + phosphate = an acyl phosphate + holo-[ACP]. Its pathway is lipid metabolism; phospholipid metabolism. In terms of biological role, catalyzes the reversible formation of acyl-phosphate (acyl-PO(4)) from acyl-[acyl-carrier-protein] (acyl-ACP). This enzyme utilizes acyl-ACP as fatty acyl donor, but not acyl-CoA. The sequence is that of Phosphate acyltransferase from Polynucleobacter necessarius subsp. necessarius (strain STIR1).